A 65-amino-acid polypeptide reads, in one-letter code: Large ribosomal subunit protein bL35 (65 aa).

The span at 1-15 shows a compositional bias: basic residues; sequence MPKMKTKKSASKRFT. Positions 1–27 are disordered; the sequence is MPKMKTKKSASKRFTARPNGSFKRGQA.

Belongs to the bacterial ribosomal protein bL35 family.

In Cupriavidus pinatubonensis (strain JMP 134 / LMG 1197) (Cupriavidus necator (strain JMP 134)), this protein is Large ribosomal subunit protein bL35.